The sequence spans 537 residues: Fucosyltransferase 6 (537 aa).

Residues Met-1–Lys-20 are Cytoplasmic-facing. The helical; Signal-anchor for type II membrane protein transmembrane segment at Ile-21–Ser-41 threads the bilayer. Residues Asn-42–Leu-537 are Lumenal-facing. 3 N-linked (GlcNAc...) asparagine glycosylation sites follow: Asn-54, Asn-231, and Asn-378.

It belongs to the glycosyltransferase 37 family. In terms of tissue distribution, expressed in roots and flowers.

Its subcellular location is the golgi apparatus. It localises to the golgi stack membrane. Its pathway is protein modification; protein glycosylation. May be involved in cell wall biosynthesis. May act as a fucosyltransferase. This Arabidopsis thaliana (Mouse-ear cress) protein is Fucosyltransferase 6 (FUT6).